Consider the following 135-residue polypeptide: Small ribosomal subunit protein uS11 (135 aa).

The protein belongs to the universal ribosomal protein uS11 family. Part of the 30S ribosomal subunit. Interacts with proteins S7 and S18. Binds to IF-3.

Its function is as follows. Located on the platform of the 30S subunit, it bridges several disparate RNA helices of the 16S rRNA. Forms part of the Shine-Dalgarno cleft in the 70S ribosome. This is Small ribosomal subunit protein uS11 from Protochlamydia amoebophila (strain UWE25).